The primary structure comprises 529 residues: Intraflagellar transport protein 56 (529 aa).

The interval 1–21 (MLHNRMTTAFERSKEQEHEAA) is disordered. Positions 11–21 (ERSKEQEHEAA) are enriched in basic and acidic residues. 6 TPR repeats span residues 57–90 (GNAD…KNPP), 154–187 (SADQ…QPEC), 189–221 (AIYM…AEDS), 285–321 (SEAR…EYTL), 359–392 (VLGR…PKES), and 428–461 (PVHR…SLQT).

It belongs to the IFT56 family.

The protein resides in the cell projection. Its subcellular location is the cilium. The protein localises to the flagellum. It is found in the cytoplasm. It localises to the cytoskeleton. The protein resides in the flagellum axoneme. Its subcellular location is the flagellum basal body. In terms of biological role, component of the intraflagellar transport complex B (IFT-B) involved in flagellar assembly. This chain is Intraflagellar transport protein 56, found in Giardia intestinalis (strain ATCC 50803 / WB clone C6) (Giardia lamblia).